We begin with the raw amino-acid sequence, 498 residues long: ATP synthase subunit beta, chloroplastic (498 aa).

An ATP-binding site is contributed by 172 to 179; that stretch reads GGAGVGKT.

This sequence belongs to the ATPase alpha/beta chains family. In terms of assembly, F-type ATPases have 2 components, CF(1) - the catalytic core - and CF(0) - the membrane proton channel. CF(1) has five subunits: alpha(3), beta(3), gamma(1), delta(1), epsilon(1). CF(0) has four main subunits: a(1), b(1), b'(1) and c(9-12).

It is found in the plastid. It localises to the chloroplast thylakoid membrane. It catalyses the reaction ATP + H2O + 4 H(+)(in) = ADP + phosphate + 5 H(+)(out). In terms of biological role, produces ATP from ADP in the presence of a proton gradient across the membrane. The catalytic sites are hosted primarily by the beta subunits. The protein is ATP synthase subunit beta, chloroplastic of Vitis vinifera (Grape).